We begin with the raw amino-acid sequence, 164 residues long: Translocator protein homolog (164 aa).

5 helical membrane-spanning segments follow: residues 16 to 34 (WSAS…NSYK), 52 to 72 (SAFG…SHLA), 89 to 106 (ILYI…PLFY), 112 to 132 (KLAL…AKTW), and 141 to 163 (KWLI…YCLL).

It belongs to the TspO/BZRP family.

The protein localises to the mitochondrion membrane. Functionally, may play a role in the transport of porphyrins and heme. The protein is Translocator protein homolog of Schizosaccharomyces pombe (strain 972 / ATCC 24843) (Fission yeast).